The sequence spans 183 residues: MLSALLVMAAIAVVLGAALGFAAIRFRVEGDPLVDKIDAILPQTQCGQCGYPGCKPYAQAIAQGEADINQCPPGGEEGVRKLADLLGREFKPLSAEHGEEKPKAVAYIDENVCIGCTLCLQACPVDAIVGAAKQMHTVVDPLCTGCELCVAPCPVDCIYMEPVRETVQTWRWKYPVVEIRKAA.

The interval 1-23 (MLSALLVMAAIAVVLGAALGFAA) is hydrophobic. The 4Fe-4S domain maps to 29–88 (EGDPLVDKIDAILPQTQCGQCGYPGCKPYAQAIAQGEADINQCPPGGEEGVRKLADLLGR). Residues Cys-46, Cys-49, Cys-54, Cys-71, Cys-113, Cys-116, Cys-119, Cys-123, Cys-143, Cys-146, Cys-149, and Cys-153 each contribute to the [4Fe-4S] cluster site. 2 4Fe-4S ferredoxin-type domains span residues 104-133 (AVAY…GAAK) and 135-163 (MHTV…MEPV).

This sequence belongs to the 4Fe4S bacterial-type ferredoxin family. RnfB subfamily. The complex is composed of six subunits: RnfA, RnfB, RnfC, RnfD, RnfE and RnfG. [4Fe-4S] cluster serves as cofactor.

The protein resides in the cell inner membrane. Its function is as follows. Part of a membrane-bound complex that couples electron transfer with translocation of ions across the membrane. The sequence is that of Ion-translocating oxidoreductase complex subunit B from Azoarcus sp. (strain BH72).